Consider the following 707-residue polypeptide: Leucine-rich repeat neuronal protein 3 (707 aa).

Residues 1 to 22 form the signal peptide; it reads MKDAPLQIHVLLGLAITALVQA. In terms of domain architecture, LRRNT spans 23 to 69; sequence GDKKVDCPQLCTCEIRPWFTPRSIYMEASTVDCNDLGLLNFPARLPA. Over 23-626 the chain is Extracellular; that stretch reads GDKKVDCPQL…DGKENGKSHT (604 aa). LRR repeat units lie at residues 70 to 91, 93 to 114, 117 to 138, 141 to 162, 165 to 186, 189 to 210, 213 to 234, 237 to 258, 261 to 282, 285 to 304, 310 to 332, and 335 to 358; these read DTQILLLQTNNIARIEHSTDFP, NLTGLDLSQNNLSSVTNINVQK, QLLSVYLEENKLTELPEKCLYG, NLQELYVNHNLLSAISPGAFVG, NLLRLHLNSNRLQMINSKWFEA, NLEILMLGDNPILRIKDMNFQP, KLRSLVIAGINLTEVPDDALVG, NLESISFYDNRLNKVPQVALQK, NLKFLDLNKNPINRIRRGDFSN, HLKELGINNMPELVSIDSLA, DLRKIEATNNPRLSYIHPNAFFR, and KLESLMLNSNALSALYHGTIESLP. Residues Asn93 and Asn103 are each glycosylated (N-linked (GlcNAc...) asparagine). Asn223 carries an N-linked (GlcNAc...) asparagine glycan. Positions 368-421 constitute an LRRCT domain; that stretch reads NPIRCDCVIRWINMNKTNIRFMEPDSLFCVDPPEFQGQNVRQVHFRDMMEICLP. Asn382 is a glycosylation site (N-linked (GlcNAc...) asparagine). Positions 421–514 constitute an Ig-like C2-type domain; the sequence is PLIAPESFPS…DLKSIMIKVG (94 aa). A disulfide bond links Cys444 and Cys496. N-linked (GlcNAc...) asparagine glycans are attached at residues Asn522, Asn579, and Asn608. Residues 523–614 enclose the Fibronectin type-III domain; sequence GSLNIKIRDI…QCVNVTTKSL (92 aa). A helical membrane pass occupies residues 627–647; the sequence is VFVACVGGLLGIIGVMCLFGC. Over 648 to 707 the chain is Cytoplasmic; the sequence is VSQEGNCENEHSYTVNHCHKPTLAFSELYPPLINLWESSKEKPASLEVKATAIGVPTSMS.

The protein localises to the membrane. This chain is Leucine-rich repeat neuronal protein 3 (Lrrn3), found in Rattus norvegicus (Rat).